A 1347-amino-acid chain; its full sequence is Protocadherin-11 X-linked (1347 aa).

A signal peptide spans 1-23; the sequence is MDLLSGTYIFAVLLACVVFHSGA. Over 24–812 the chain is Extracellular; the sequence is QEKNYTIREE…VSSPTSDYVK (789 aa). 7 Cadherin domains span residues 26–139, 140–249, 250–355, 362–466, 467–570, 571–673, and 677–795; these read KNYT…APLF, PATV…HPVF, KETE…VPSI, NPVN…APVF, TQSF…SPVF, THNE…KPVF, and PSNY…APVT. N-linked (GlcNAc...) asparagine glycans are attached at residues N27, N48, and N54. A glycan (N-linked (GlcNAc...) asparagine) is linked at N344. N553 carries an N-linked (GlcNAc...) asparagine glycan. A glycan (N-linked (GlcNAc...) asparagine) is linked at N773. Residues 813–833 form a helical membrane-spanning segment; the sequence is ILVAAVAGTITVVVVIFITAV. Residues 834 to 1347 are Cytoplasmic-facing; the sequence is VRCRQAPHLK…DSPVMEEHPL (514 aa). 3 disordered regions span residues 1057 to 1091, 1097 to 1116, and 1325 to 1347; these read LPEGSQESSSDGGLGDHDAGSLTSTSHGLPLGYPQ, RATPSNRTEGDGNSDPESTF, and TFTPRQQARPSRGDSPVMEEHPL.

The protein resides in the cell membrane. Potential calcium-dependent cell-adhesion protein. This chain is Protocadherin-11 X-linked (PCDH11X), found in Pan troglodytes (Chimpanzee).